We begin with the raw amino-acid sequence, 156 residues long: Small ribosomal subunit protein uS7 (156 aa).

This sequence belongs to the universal ribosomal protein uS7 family. In terms of assembly, part of the 30S ribosomal subunit. Contacts proteins S9 and S11.

Its function is as follows. One of the primary rRNA binding proteins, it binds directly to 16S rRNA where it nucleates assembly of the head domain of the 30S subunit. Is located at the subunit interface close to the decoding center, probably blocks exit of the E-site tRNA. In Listeria innocua serovar 6a (strain ATCC BAA-680 / CLIP 11262), this protein is Small ribosomal subunit protein uS7.